The primary structure comprises 176 residues: NAD(P)H-quinone oxidoreductase subunit 6, chloroplastic (176 aa).

5 helical membrane-spanning segments follow: residues 10 to 30, 32 to 52, 61 to 81, 92 to 112, and 152 to 172; these read FLLVFLGSGLILGGLGVVLLP, PIYSAFSLGLVLVCTSLFYIL, AQLLIYVGAINVLIIFAVMFM, LWTVGDGITSMVCISLFISLI, and FFLPFELISIILLVALIGAIA.

This sequence belongs to the complex I subunit 6 family. NDH is composed of at least 16 different subunits, 5 of which are encoded in the nucleus.

The protein resides in the plastid. It localises to the chloroplast thylakoid membrane. It carries out the reaction a plastoquinone + NADH + (n+1) H(+)(in) = a plastoquinol + NAD(+) + n H(+)(out). It catalyses the reaction a plastoquinone + NADPH + (n+1) H(+)(in) = a plastoquinol + NADP(+) + n H(+)(out). Its function is as follows. NDH shuttles electrons from NAD(P)H:plastoquinone, via FMN and iron-sulfur (Fe-S) centers, to quinones in the photosynthetic chain and possibly in a chloroplast respiratory chain. The immediate electron acceptor for the enzyme in this species is believed to be plastoquinone. Couples the redox reaction to proton translocation, and thus conserves the redox energy in a proton gradient. The polypeptide is NAD(P)H-quinone oxidoreductase subunit 6, chloroplastic (ndhG) (Nicotiana tabacum (Common tobacco)).